The primary structure comprises 88 residues: ATP synthase subunit 9, mitochondrial (88 aa).

2 consecutive transmembrane segments (helical) span residues 8 to 28 and 45 to 72; these read IGAG…GNVF and LFGY…LILF.

It belongs to the ATPase C chain family. As to quaternary structure, F-type ATPases have 2 components, CF(1) - the catalytic core - and CF(0) - the membrane proton channel. CF(1) has five subunits: alpha(3), beta(3), gamma(1), delta(1), epsilon(1). CF(0) has three main subunits: a, b and c.

Its subcellular location is the mitochondrion membrane. The enzyme catalyses ATP + H2O + 4 H(+)(in) = ADP + phosphate + 5 H(+)(out). In terms of biological role, this protein is one of the chains of the nonenzymatic membrane component (F0) of mitochondrial ATPase. This chain is ATP synthase subunit 9, mitochondrial (ATP9), found in Beta vulgaris (Sugar beet).